The sequence spans 310 residues: Ribosomal RNA small subunit methyltransferase H (310 aa).

S-adenosyl-L-methionine is bound by residues 32-34 (GGH), aspartate 52, phenylalanine 79, aspartate 100, and glutamine 107.

Belongs to the methyltransferase superfamily. RsmH family.

It localises to the cytoplasm. The enzyme catalyses cytidine(1402) in 16S rRNA + S-adenosyl-L-methionine = N(4)-methylcytidine(1402) in 16S rRNA + S-adenosyl-L-homocysteine + H(+). Functionally, specifically methylates the N4 position of cytidine in position 1402 (C1402) of 16S rRNA. The polypeptide is Ribosomal RNA small subunit methyltransferase H (Geobacillus thermodenitrificans (strain NG80-2)).